The chain runs to 133 residues: uncharacterized protein (133 aa).

This is an uncharacterized protein from Caenorhabditis elegans.